The sequence spans 69 residues: MAVPKKRTSKSKTRIRKAIWKNKANKSALRAFSLAKSILTNRSKSFYYTINDKLLNSSKSISTSKLDES.

The protein belongs to the bacterial ribosomal protein bL32 family.

Its subcellular location is the plastid. It is found in the chloroplast. The protein is Large ribosomal subunit protein bL32c (rpl32) of Marchantia polymorpha (Common liverwort).